The primary structure comprises 987 residues: Probable outer membrane protein PmpG (987 aa).

The signal sequence occupies residues 1-25 (MMQTPFHKFFLLAMLSYSLLQGGHA). The 281-residue stretch at 707 to 987 (GRAYCRGIWI…GLSIGSKIRF (281 aa)) folds into the Autotransporter domain.

It belongs to the PMP outer membrane protein family.

It localises to the secreted. The protein resides in the cell wall. It is found in the cell outer membrane. This Chlamydia muridarum (strain MoPn / Nigg) protein is Probable outer membrane protein PmpG (pmpG).